The following is a 574-amino-acid chain: Septation ring formation regulator EzrA (574 aa).

Over 1–7 (MSSGIIL) the chain is Extracellular. The chain crosses the membrane as a helical span at residues 8–26 (LIVAIVLLVIIAYLVGVII). Residues 27-574 (RKRNDSLITS…YEKTREHIRF (548 aa)) are Cytoplasmic-facing. Coiled coils occupy residues 102-141 (NFIR…EEKN), 274-350 (ELVT…ETES), and 459-520 (QLEA…SFEA).

It belongs to the EzrA family.

The protein resides in the cell membrane. In terms of biological role, negative regulator of FtsZ ring formation; modulates the frequency and position of FtsZ ring formation. Inhibits FtsZ ring formation at polar sites. Interacts either with FtsZ or with one of its binding partners to promote depolymerization. The sequence is that of Septation ring formation regulator EzrA from Streptococcus pyogenes serotype M6 (strain ATCC BAA-946 / MGAS10394).